The sequence spans 156 residues: Small ribosomal subunit protein uS7 (156 aa).

Belongs to the universal ribosomal protein uS7 family. In terms of assembly, part of the 30S ribosomal subunit. Contacts proteins S9 and S11.

In terms of biological role, one of the primary rRNA binding proteins, it binds directly to 16S rRNA where it nucleates assembly of the head domain of the 30S subunit. Is located at the subunit interface close to the decoding center, probably blocks exit of the E-site tRNA. This chain is Small ribosomal subunit protein uS7, found in Finegoldia magna (strain ATCC 29328 / DSM 20472 / WAL 2508) (Peptostreptococcus magnus).